The chain runs to 1315 residues: DNA-directed RNA polymerase subunit beta' (1315 aa).

Positions 60, 62, 75, and 78 each coordinate Zn(2+). Residues Asp535, Asp537, and Asp539 each coordinate Mg(2+). Residues Cys890, Cys967, Cys974, and Cys977 each coordinate Zn(2+).

The protein belongs to the RNA polymerase beta' chain family. In terms of assembly, the RNAP catalytic core consists of 2 alpha, 1 beta, 1 beta' and 1 omega subunit. When a sigma factor is associated with the core the holoenzyme is formed, which can initiate transcription. It depends on Mg(2+) as a cofactor. The cofactor is Zn(2+).

The enzyme catalyses RNA(n) + a ribonucleoside 5'-triphosphate = RNA(n+1) + diphosphate. Functionally, DNA-dependent RNA polymerase catalyzes the transcription of DNA into RNA using the four ribonucleoside triphosphates as substrates. The chain is DNA-directed RNA polymerase subunit beta' from Mycobacterium sp. (strain MCS).